The following is a 206-amino-acid chain: Pyridoxine/pyridoxamine 5'-phosphate oxidase (206 aa).

FMN contacts are provided by residues 55–60, 70–71, R76, K77, and Q99; these read RVVLLK and YT. K60 is a binding site for substrate. Substrate is bound by residues Y117, R121, and S125. Residues 134 to 135 and W179 contribute to the FMN site; that span reads QS. 185–187 contributes to the substrate binding site; the sequence is RLH. R189 lines the FMN pocket.

The protein belongs to the pyridoxamine 5'-phosphate oxidase family. In terms of assembly, homodimer. FMN serves as cofactor.

It catalyses the reaction pyridoxamine 5'-phosphate + O2 + H2O = pyridoxal 5'-phosphate + H2O2 + NH4(+). It carries out the reaction pyridoxine 5'-phosphate + O2 = pyridoxal 5'-phosphate + H2O2. It participates in cofactor metabolism; pyridoxal 5'-phosphate salvage; pyridoxal 5'-phosphate from pyridoxamine 5'-phosphate: step 1/1. Its pathway is cofactor metabolism; pyridoxal 5'-phosphate salvage; pyridoxal 5'-phosphate from pyridoxine 5'-phosphate: step 1/1. In terms of biological role, catalyzes the oxidation of either pyridoxine 5'-phosphate (PNP) or pyridoxamine 5'-phosphate (PMP) into pyridoxal 5'-phosphate (PLP). This chain is Pyridoxine/pyridoxamine 5'-phosphate oxidase, found in Myxococcus xanthus (strain DK1622).